We begin with the raw amino-acid sequence, 160 residues long: S-ribosylhomocysteine lyase (160 aa).

Fe cation-binding residues include histidine 57, histidine 61, and cysteine 127.

It belongs to the LuxS family. In terms of assembly, homodimer. It depends on Fe cation as a cofactor.

The enzyme catalyses S-(5-deoxy-D-ribos-5-yl)-L-homocysteine = (S)-4,5-dihydroxypentane-2,3-dione + L-homocysteine. Its function is as follows. Involved in the synthesis of autoinducer 2 (AI-2) which is secreted by bacteria and is used to communicate both the cell density and the metabolic potential of the environment. The regulation of gene expression in response to changes in cell density is called quorum sensing. Catalyzes the transformation of S-ribosylhomocysteine (RHC) to homocysteine (HC) and 4,5-dihydroxy-2,3-pentadione (DPD). This is S-ribosylhomocysteine lyase from Streptococcus pyogenes serotype M4 (strain MGAS10750).